Reading from the N-terminus, the 167-residue chain is Large ribosomal subunit protein bL9 (167 aa).

It belongs to the bacterial ribosomal protein bL9 family.

In terms of biological role, binds to the 23S rRNA. This Chlamydia muridarum (strain MoPn / Nigg) protein is Large ribosomal subunit protein bL9.